The following is a 211-amino-acid chain: Peptidyl-prolyl cis-trans isomerase FKBP14 (211 aa).

Positions 1 to 19 (MRLFLWNAVLTLFVTSLIG) are cleaved as a signal peptide. The cysteines at positions 38 and 96 are disulfide-linked. A PPIase FKBP-type domain is found at 45–135 (GDLMLVHYEG…IFNIDLLEIR (91 aa)). The EF-hand 1 domain maps to 135 to 170 (RNGPRSHESFQEMDLNDDWKLSKDEVKAYLKKEFEK). 5 residues coordinate Ca(2+): Asp148, Asn150, Asp152, Lys154, and Glu159. N-linked (GlcNAc...) asparagine glycosylation occurs at Asn176. Residues 179-211 (HHDALVEDIFDKEDEDKDGFISAREFTYKHDEL) enclose the EF-hand 2 domain. 5 residues coordinate Ca(2+): Asp192, Asp194, Asp196, Phe198, and Glu203. The Prevents secretion from ER signature appears at 208-211 (HDEL).

In terms of assembly, monomer. Homodimer. Interacts with type III, type IV and type X collagens.

It localises to the endoplasmic reticulum lumen. It catalyses the reaction [protein]-peptidylproline (omega=180) = [protein]-peptidylproline (omega=0). With respect to regulation, inhibited by tacrolimus/FK506. In terms of biological role, PPIase which accelerates the folding of proteins during protein synthesis. Has a preference for substrates containing 4-hydroxylproline modifications, including type III collagen. May also target type VI and type X collagens. The chain is Peptidyl-prolyl cis-trans isomerase FKBP14 (FKBP14) from Homo sapiens (Human).